We begin with the raw amino-acid sequence, 147 residues long: Prefoldin subunit alpha (147 aa).

This sequence belongs to the prefoldin alpha subunit family. As to quaternary structure, heterohexamer of two alpha and four beta subunits.

Its subcellular location is the cytoplasm. Its function is as follows. Molecular chaperone capable of stabilizing a range of proteins. Seems to fulfill an ATP-independent, HSP70-like function in archaeal de novo protein folding. The chain is Prefoldin subunit alpha from Methanocorpusculum labreanum (strain ATCC 43576 / DSM 4855 / Z).